We begin with the raw amino-acid sequence, 621 residues long: Kininogen-1 (621 aa).

An N-terminal signal peptide occupies residues 1–18 (MKLITILFLCSRLLPSLT). Residues 27 to 131 (CNDQDVFKAV…IQTCLITPAE (105 aa)) form the Cystatin kininogen-type 1 domain. 9 disulfide bridges follow: C27–C591, C82–C93, C106–C125, C141–C144, C205–C217, C228–C247, C263–C266, C327–C339, and C350–C369. 2 N-linked (GlcNAc...) asparagine glycosylation sites follow: N47 and N87. T136 is a glycosylation site (O-linked (GalNAc...) threonine; partial). The region spanning 150 to 253 (TKSPDLEPVL…SQKCDLYPVK (104 aa)) is the Cystatin kininogen-type 2 domain. N168 and N169 each carry an N-linked (GlcNAc...) asparagine glycan. N197 carries an N-linked (GlcNAc...) asparagine; partial glycan. An N-linked (GlcNAc...) asparagine glycan is attached at N204. The Cystatin kininogen-type 3 domain occupies 272 to 375 (VDSPDLEEPL…TVNCQPLGQT (104 aa)). Phosphoserine is present on S331. The segment at 396-497 (EGSTTVSLPH…GKNNGKHYDW (102 aa)) is disordered. O-linked (GalNAc...) serine glycosylation is present at S398. 2 O-linked (GalNAc...) threonine glycosylation sites follow: T399 and T400. A glycan (O-linked (GalNAc...) serine) is linked at S406. Residues 444–492 (GHKHKHDQGHGHHGSHGLGHGHQKQHGLGHGHKHGHGHGKHKNKGKNNG) are compositionally biased toward basic residues. Residue S512 is glycosylated (O-linked (GalNAc...) serine). O-linked (GalNAc...) threonine glycosylation is found at T520, T524, T536, T548, T553, and T570. S581 carries an O-linked (GalNAc...) serine glycan.

In terms of processing, bradykinin is released from kininogen by plasma kallikrein. Phosphorylated by FAM20C in the extracellular medium. Post-translationally, bradykinin is inactivated by ACE, which removes the dipeptide Arg-Phe from its C-terminus. Plasma.

Its subcellular location is the secreted. The protein localises to the extracellular space. Its function is as follows. Kininogens are inhibitors of thiol proteases. HMW-kininogen plays an important role in blood coagulation by helping to position optimally prekallikrein and factor XI next to factor XII; HMW-kininogen inhibits the thrombin- and plasmin-induced aggregation of thrombocytes. LMW-kininogen inhibits the aggregation of thrombocytes. LMW-kininogen is in contrast to HMW-kininogen not involved in blood clotting. Functionally, the active peptide bradykinin is a potent vasodilatator that is released from HMW-kininogen shows a variety of physiological effects: (A) influence in smooth muscle contraction, (B) induction of hypotension, (C) natriuresis and diuresis, (D) decrease in blood glucose level, (E) it is a mediator of inflammation and causes (E1) increase in vascular permeability, (E2) stimulation of nociceptors (4E3) release of other mediators of inflammation (e.g. prostaglandins), (F) it has a cardioprotective effect (directly via bradykinin action, indirectly via endothelium-derived relaxing factor action). In Bos taurus (Bovine), this protein is Kininogen-1 (KNG1).